We begin with the raw amino-acid sequence, 166 residues long: Cofilin-1 (166 aa).

A2 is modified (N-acetylalanine). Position 3 is a phosphoserine; by NRK (S3). Positions G4 to L153 constitute an ADF-H domain. S8 carries the post-translational modification Phosphoserine. The residue at position 13 (K13) is an N6-acetyllysine. T25 carries the phosphothreonine modification. Residues K30 to K34 carry the Nuclear localization signal motif. A Phosphoserine modification is found at S41. T63 carries the post-translational modification Phosphothreonine. Y68 is subject to Phosphotyrosine. K73 carries the post-translational modification N6-acetyllysine. Phosphotyrosine is present on Y82. The residue at position 108 (S108) is a Phosphoserine. Residue K132 forms a Glycyl lysine isopeptide (Lys-Gly) (interchain with G-Cter in SUMO2) linkage. Y140 carries the post-translational modification Phosphotyrosine. K144 carries the post-translational modification N6-acetyllysine. S156 carries the post-translational modification Phosphoserine.

It belongs to the actin-binding proteins ADF family. In terms of assembly, can bind G- and F-actin in a 1:1 ratio of cofilin to actin. It is a major component of intranuclear and cytoplasmic actin rods. Interacts with the subcortical maternal complex (SCMC) via interaction with TLE6 isoform 1 and NLRP5. Interacts with C9orf72. As to quaternary structure, (Microbial infection) Interacts with human respiratory syncytial virus (HRSV) matrix protein; this interaction probably facilitates viral replication. In terms of processing, inactivated by phosphorylation on Ser-3. Phosphorylated on Ser-3 in resting cells. Dephosphorylated by PDXP/chronophin; this restores its activity in promoting actin filament depolymerization. The phosphorylation of Ser-24 may prevent recognition of the nuclear localization signal. Phosphorylated via a ARRB1-RAC1-LIMK1-PAK1 cascade upon active ligand stimulation of atypical chemokine receptor ACKR2. In terms of tissue distribution, widely distributed in various tissues.

The protein localises to the nucleus matrix. It is found in the cytoplasm. It localises to the cytoskeleton. The protein resides in the cell projection. Its subcellular location is the ruffle membrane. The protein localises to the lamellipodium membrane. It is found in the lamellipodium. It localises to the growth cone. The protein resides in the axon. Functionally, binds to F-actin and exhibits pH-sensitive F-actin depolymerizing activity. In conjunction with the subcortical maternal complex (SCMC), plays an essential role for zygotes to progress beyond the first embryonic cell divisions via regulation of actin dynamics. Required for the centralization of the mitotic spindle and symmetric division of zygotes. Plays a role in the regulation of cell morphology and cytoskeletal organization in epithelial cells. Required for the up-regulation of atypical chemokine receptor ACKR2 from endosomal compartment to cell membrane, increasing its efficiency in chemokine uptake and degradation. Required for neural tube morphogenesis and neural crest cell migration. This chain is Cofilin-1 (CFL1), found in Homo sapiens (Human).